A 399-amino-acid polypeptide reads, in one-letter code: Phosphoglycerate kinase (399 aa).

Substrate is bound by residues 20-22 (DFN), Arg-35, 58-61 (HLGR), Arg-117, and Arg-154. ATP contacts are provided by residues Lys-204, Gly-295, Glu-326, and 355 to 358 (GGDS).

The protein belongs to the phosphoglycerate kinase family. In terms of assembly, monomer.

Its subcellular location is the cytoplasm. It catalyses the reaction (2R)-3-phosphoglycerate + ATP = (2R)-3-phospho-glyceroyl phosphate + ADP. It participates in carbohydrate degradation; glycolysis; pyruvate from D-glyceraldehyde 3-phosphate: step 2/5. The polypeptide is Phosphoglycerate kinase (Beutenbergia cavernae (strain ATCC BAA-8 / DSM 12333 / CCUG 43141 / JCM 11478 / NBRC 16432 / NCIMB 13614 / HKI 0122)).